A 273-amino-acid polypeptide reads, in one-letter code: Large ribosomal subunit protein uL2cz/uL2cy (273 aa).

Disordered stretches follow at residues 1-24 and 224-254; these read MAIHLYKTSTPSTRKGAVDSQAKS and NPVDHPHGGGEGRAPIGRKKPTTPWGYPALG.

It belongs to the universal ribosomal protein uL2 family. Part of the 50S ribosomal subunit.

It is found in the plastid. It localises to the chloroplast. The chain is Large ribosomal subunit protein uL2cz/uL2cy (rpl2-A) from Nymphaea alba (White water-lily).